Reading from the N-terminus, the 267-residue chain is NAD-capped RNA hydrolase NudC (267 aa).

A substrate-binding site is contributed by Arg-70. Residues Cys-99 and Cys-102 each coordinate Zn(2+). Residue Glu-112 participates in substrate binding. Positions 117 and 122 each coordinate Zn(2+). Residue Tyr-127 coordinates substrate. Positions 128 to 257 constitute a Nudix hydrolase domain; the sequence is PVICPSIIVA…TIARALIEAT (130 aa). A divalent metal cation is bound by residues Ala-166, Glu-182, and Glu-186. A Nudix box motif is present at residues 167–188; that stretch reads GFVEVGESFEQTIHREVFEETG. 200–207 provides a ligand contact to substrate; sequence QPWAFPNS. Position 227 (Glu-227) interacts with a divalent metal cation. Ala-250 contacts substrate.

Belongs to the Nudix hydrolase family. NudC subfamily. Homodimer. The cofactor is Mg(2+). It depends on Mn(2+) as a cofactor. Zn(2+) is required as a cofactor.

It carries out the reaction a 5'-end NAD(+)-phospho-ribonucleoside in mRNA + H2O = a 5'-end phospho-adenosine-phospho-ribonucleoside in mRNA + beta-nicotinamide D-ribonucleotide + 2 H(+). It catalyses the reaction NAD(+) + H2O = beta-nicotinamide D-ribonucleotide + AMP + 2 H(+). The enzyme catalyses NADH + H2O = reduced beta-nicotinamide D-ribonucleotide + AMP + 2 H(+). MRNA decapping enzyme that specifically removes the nicotinamide adenine dinucleotide (NAD) cap from a subset of mRNAs by hydrolyzing the diphosphate linkage to produce nicotinamide mononucleotide (NMN) and 5' monophosphate mRNA. The NAD-cap is present at the 5'-end of some mRNAs and stabilizes RNA against 5'-processing. Has preference for mRNAs with a 5'-end purine. Catalyzes the hydrolysis of a broad range of dinucleotide pyrophosphates. In Mannheimia succiniciproducens (strain KCTC 0769BP / MBEL55E), this protein is NAD-capped RNA hydrolase NudC.